We begin with the raw amino-acid sequence, 304 residues long: Glycine--tRNA ligase alpha subunit (304 aa).

Belongs to the class-II aminoacyl-tRNA synthetase family. As to quaternary structure, tetramer of two alpha and two beta subunits.

Its subcellular location is the cytoplasm. It carries out the reaction tRNA(Gly) + glycine + ATP = glycyl-tRNA(Gly) + AMP + diphosphate. In Pectobacterium carotovorum subsp. carotovorum (strain PC1), this protein is Glycine--tRNA ligase alpha subunit.